Reading from the N-terminus, the 117-residue chain is Ribonuclease P protein component (117 aa).

This sequence belongs to the RnpA family. Consists of a catalytic RNA component (M1 or rnpB) and a protein subunit.

The enzyme catalyses Endonucleolytic cleavage of RNA, removing 5'-extranucleotides from tRNA precursor.. In terms of biological role, RNaseP catalyzes the removal of the 5'-leader sequence from pre-tRNA to produce the mature 5'-terminus. It can also cleave other RNA substrates such as 4.5S RNA. The protein component plays an auxiliary but essential role in vivo by binding to the 5'-leader sequence and broadening the substrate specificity of the ribozyme. The chain is Ribonuclease P protein component from Desulforapulum autotrophicum (strain ATCC 43914 / DSM 3382 / VKM B-1955 / HRM2) (Desulfobacterium autotrophicum).